The following is a 257-amino-acid chain: Type III pantothenate kinase (257 aa).

6-13 (DVGNTSTK) is an ATP binding site. Residue 109-112 (GADR) participates in substrate binding. Catalysis depends on D111, which acts as the Proton acceptor. D132 contacts K(+). ATP is bound at residue T135. Residue T187 participates in substrate binding.

This sequence belongs to the type III pantothenate kinase family. In terms of assembly, homodimer. It depends on NH4(+) as a cofactor. K(+) is required as a cofactor.

It localises to the cytoplasm. The enzyme catalyses (R)-pantothenate + ATP = (R)-4'-phosphopantothenate + ADP + H(+). It functions in the pathway cofactor biosynthesis; coenzyme A biosynthesis; CoA from (R)-pantothenate: step 1/5. Catalyzes the phosphorylation of pantothenate (Pan), the first step in CoA biosynthesis. The polypeptide is Type III pantothenate kinase (Anaplasma marginale (strain Florida)).